The following is a 374-amino-acid chain: Cathepsin W (374 aa).

A signal peptide spans 1 to 21 (MAITVYLSCLLVLSMAGLAQG). The propeptide occupies 22 to 127 (IKSSLRSQDP…EVGSEEWGES (106 aa)). 2 cysteine pairs are disulfide-bonded: C150–C191 and C184–C226. Residue C153 is part of the active site. N-linked (GlcNAc...) asparagine glycosylation occurs at N205. Residues H291 and N329 contribute to the active site. N-linked (GlcNAc...) asparagine glycosylation is present at N347.

This sequence belongs to the peptidase C1 family.

The protein resides in the endoplasmic reticulum. Its function is as follows. May have a specific function in the mechanism or regulation of T-cell cytolytic activity. This chain is Cathepsin W (CTSW), found in Felis catus (Cat).